A 680-amino-acid polypeptide reads, in one-letter code: E3 ubiquitin-protein ligase brl2 (680 aa).

The stretch at 44–72 (RSIQFDELESKIEGLQNLAEEKLKVLATL) forms a coiled coil. Residues 206–233 (PQSTKVKEEATTSSKGKDEEKKVSTVEQ) are disordered. A compositionally biased stretch (basic and acidic residues) spans 210-229 (KVKEEATTSSKGKDEEKKVS). Coiled-coil stretches lie at residues 261 to 288 (LDSN…TNLK), 353 to 399 (MQND…ETMV), and 485 to 609 (DSLH…LKDT). Residues 627-667 (CSVCNFERWKDRIISLCGHGFCYQCIQKRIETRQRRCPICG) form an RING-type zinc finger.

This sequence belongs to the BRE1 family. Component of the histone H2B ubiquitin ligase complex (HULC) composed of at least brl1, brl2, rhp6 and shf1.

It localises to the nucleus. It catalyses the reaction S-ubiquitinyl-[E2 ubiquitin-conjugating enzyme]-L-cysteine + [acceptor protein]-L-lysine = [E2 ubiquitin-conjugating enzyme]-L-cysteine + N(6)-ubiquitinyl-[acceptor protein]-L-lysine.. It functions in the pathway protein modification; protein ubiquitination. Functionally, E3 ubiquitin-protein ligase which belongs to the histone H2B ubiquitin ligase complex (HULC) which mediates monoubiquitination of histone H2B to form H2BK123ub1. H2BK123ub1 gives a specific tag for epigenetic transcriptional activation and is also a prerequisite for H3K4me and H3K79me formation. This is E3 ubiquitin-protein ligase brl2 (brl2) from Schizosaccharomyces pombe (strain 972 / ATCC 24843) (Fission yeast).